A 163-amino-acid chain; its full sequence is Probable calcium-binding protein CML26 (163 aa).

Ala2 carries the post-translational modification N-acetylalanine. EF-hand domains lie at 16-51 (STDMELKKVFDKFDANGDGKISVSELGNVFKSMGTS), 52-82 (YTEEELNRVLDEIDIDCDGFINQEEFATICR), 85-120 (SSAVEIREAFDLYDQNKNGLISSSEIHKVLNRLGMT), and 121-156 (CSVEDCVRMIGHVDTDGDGNVNFEEFQKMMSSPELV). The Ca(2+) site is built by Asp29, Asn31, Asp33, Lys35, Glu40, Asp65, Asp67, Asp69, Glu76, Asp98, Asn100, Asn102, Glu109, Asp134, Asp136, Asp138, Asn140, and Glu145.

Functionally, potential calcium sensor. The sequence is that of Probable calcium-binding protein CML26 (CML26) from Arabidopsis thaliana (Mouse-ear cress).